The sequence spans 241 residues: MNVSRPSGRQADALRPVRIERAFTCHAEGSVLVSFGNTLVVCTASVEAKVPVFLRNKGEGWITAEYGMLPRSTHTRSEREAARGKQAGRTLEIQRLIGRALRTCVDRTALGERTITLDCDVLQADGGTRTAAITGAYVALVDAVRCLEQRGQLKKSPLIGAVAAVSVGIYRGMPVLDLDYPEDSDCDTDMNVVMNDEGGFIELQGTAEQQAFRRGELDMLLALAERGTAMLFDIQREALAR.

Residues arginine 89 and 127–129 (GTR) contribute to the phosphate site.

It belongs to the RNase PH family. As to quaternary structure, homohexameric ring arranged as a trimer of dimers.

The enzyme catalyses tRNA(n+1) + phosphate = tRNA(n) + a ribonucleoside 5'-diphosphate. Phosphorolytic 3'-5' exoribonuclease that plays an important role in tRNA 3'-end maturation. Removes nucleotide residues following the 3'-CCA terminus of tRNAs; can also add nucleotides to the ends of RNA molecules by using nucleoside diphosphates as substrates, but this may not be physiologically important. Probably plays a role in initiation of 16S rRNA degradation (leading to ribosome degradation) during starvation. The chain is Ribonuclease PH from Xylella fastidiosa (strain M23).